A 388-amino-acid polypeptide reads, in one-letter code: CUE domain-containing protein 1 (388 aa).

The segment covering 1-10 (MTSLFRRSSS) has biased composition (low complexity). Residues 1–45 (MTSLFRRSSSGSGGGGATGARGAGTGAGDGSTAPQELNNSRPARQ) are disordered. Residues 11 to 29 (GSGGGGATGARGAGTGAGD) are compositionally biased toward gly residues. The 44-residue stretch at 50 to 93 (EFNQAMDDFKTMFPNMDYDIIECVLRANSGAVDATIDQLLQMNL) folds into the CUE domain. Disordered regions lie at residues 152-178 (PTPP…WNPP), 196-225 (DSIQ…ACDQ), 270-302 (SQKS…TVSE), and 369-388 (DFRG…REGQ). The segment covering 290–300 (VPGTSETNPTV) has biased composition (polar residues).

This chain is CUE domain-containing protein 1 (Cuedc1), found in Mus musculus (Mouse).